Here is a 1072-residue protein sequence, read N- to C-terminus: Carbamoyl phosphate synthase large chain (1072 aa).

The tract at residues M1 to E401 is carboxyphosphate synthetic domain. ATP is bound by residues R129, R169, G175, G176, K208, L210, E215, G241, V242, H243, Q284, and E298. An ATP-grasp 1 domain is found at K133 to I327. Residues Q284, E298, and N300 each contribute to the Mg(2+) site. Q284, E298, and N300 together coordinate Mn(2+). Residues I402–D544 form an oligomerization domain region. Residues E545–G929 are carbamoyl phosphate synthetic domain. An ATP-grasp 2 domain is found at S671–L861. The ATP site is built by R707, K746, I748, E752, G777, V778, H779, S780, Q820, and E832. Mg(2+)-binding residues include Q820, E832, and N834. 3 residues coordinate Mn(2+): Q820, E832, and N834. Residues L930–L1072 form the MGS-like domain. The allosteric domain stretch occupies residues L930–L1072.

Belongs to the CarB family. In terms of assembly, composed of two chains; the small (or glutamine) chain promotes the hydrolysis of glutamine to ammonia, which is used by the large (or ammonia) chain to synthesize carbamoyl phosphate. Tetramer of heterodimers (alpha,beta)4. Mg(2+) is required as a cofactor. It depends on Mn(2+) as a cofactor.

It catalyses the reaction hydrogencarbonate + L-glutamine + 2 ATP + H2O = carbamoyl phosphate + L-glutamate + 2 ADP + phosphate + 2 H(+). The catalysed reaction is hydrogencarbonate + NH4(+) + 2 ATP = carbamoyl phosphate + 2 ADP + phosphate + 2 H(+). The protein operates within amino-acid biosynthesis; L-arginine biosynthesis; carbamoyl phosphate from bicarbonate: step 1/1. Its pathway is pyrimidine metabolism; UMP biosynthesis via de novo pathway; (S)-dihydroorotate from bicarbonate: step 1/3. Large subunit of the glutamine-dependent carbamoyl phosphate synthetase (CPSase). CPSase catalyzes the formation of carbamoyl phosphate from the ammonia moiety of glutamine, carbonate, and phosphate donated by ATP, constituting the first step of 2 biosynthetic pathways, one leading to arginine and/or urea and the other to pyrimidine nucleotides. The large subunit (synthetase) binds the substrates ammonia (free or transferred from glutamine from the small subunit), hydrogencarbonate and ATP and carries out an ATP-coupled ligase reaction, activating hydrogencarbonate by forming carboxy phosphate which reacts with ammonia to form carbamoyl phosphate. The polypeptide is Carbamoyl phosphate synthase large chain (Thermoanaerobacter pseudethanolicus (strain ATCC 33223 / 39E) (Clostridium thermohydrosulfuricum)).